A 534-amino-acid polypeptide reads, in one-letter code: Calcium uptake protein 1 homolog, mitochondrial (534 aa).

A mitochondrion-targeting transit peptide spans 1–32; the sequence is MLHCSFLRVIPIKNASKRLIIVRSLTSAPAKT. The disordered stretch occupies residues 131–150; it reads PEASQKEEVTESNGEVEEVK. EF-hand domains are found at residues 271 to 306, 338 to 359, and 466 to 501; these read TSHA…IMSQ, KDGK…LQHD, and LSDH…RMRR. Residues Asp-284, Asp-286, Asn-288, and Glu-295 each coordinate Ca(2+).

This sequence belongs to the MICU1 family. MICU1 subfamily. Expressed at low levels in PLM touch receptor neurons, germ cells, epidermis, and muscles.

It is found in the mitochondrion intermembrane space. The protein resides in the mitochondrion inner membrane. In terms of biological role, calcium sensor of the mitochondrial calcium uniporter (mcu-1) channel, which senses calcium level via its EF-hand domains. At low calcium levels, micu-1 occludes the pore of the mcu-1 channel, preventing mitochondrial calcium uptake. At higher calcium levels, calcium-binding to micu-1 induces a conformational change that weakens mcu-1-micu-1 interactions and moves micu-1 away from the pore, allowing calcium permeation through the mcu-1 channel. Also required to protect against manganese toxicity by preventing manganese uptake by mcu-1. Modulates the activity of the mitochondrial calcium uniporter protein mcu-1 depending on the level of intracellular calcium in PLM touch receptor neurons following axonal injury. This is Calcium uptake protein 1 homolog, mitochondrial from Caenorhabditis elegans.